The sequence spans 497 residues: ATP synthase subunit alpha 2 (497 aa).

Residue 167 to 174 (GERATGKT) participates in ATP binding.

The protein belongs to the ATPase alpha/beta chains family. In terms of assembly, F-type ATPases have 2 components, CF(1) - the catalytic core - and CF(0) - the membrane proton channel. CF(1) has five subunits: alpha(3), beta(3), gamma(1), delta(1), epsilon(1). CF(0) has four main subunits: a(1), b(1), b'(1) and c(9-12).

Its subcellular location is the cell inner membrane. The catalysed reaction is ATP + H2O + 4 H(+)(in) = ADP + phosphate + 5 H(+)(out). In terms of biological role, produces ATP from ADP in the presence of a proton gradient across the membrane. The alpha chain is a regulatory subunit. The sequence is that of ATP synthase subunit alpha 2 from Cereibacter sphaeroides (strain ATCC 17023 / DSM 158 / JCM 6121 / CCUG 31486 / LMG 2827 / NBRC 12203 / NCIMB 8253 / ATH 2.4.1.) (Rhodobacter sphaeroides).